The chain runs to 178 residues: Adenine phosphoribosyltransferase (178 aa).

It belongs to the purine/pyrimidine phosphoribosyltransferase family. In terms of assembly, homodimer.

The protein resides in the cytoplasm. It carries out the reaction AMP + diphosphate = 5-phospho-alpha-D-ribose 1-diphosphate + adenine. Its pathway is purine metabolism; AMP biosynthesis via salvage pathway; AMP from adenine: step 1/1. Catalyzes a salvage reaction resulting in the formation of AMP, that is energically less costly than de novo synthesis. This Cereibacter sphaeroides (strain KD131 / KCTC 12085) (Rhodobacter sphaeroides) protein is Adenine phosphoribosyltransferase.